The following is a 425-amino-acid chain: Serine--tRNA ligase (425 aa).

An L-serine-binding site is contributed by 232–234 (TAE). Residues 263–265 (RRE) and V279 contribute to the ATP site. An L-serine-binding site is contributed by E286. 350–353 (EVVS) contacts ATP. T387 serves as a coordination point for L-serine.

The protein belongs to the class-II aminoacyl-tRNA synthetase family. Type-1 seryl-tRNA synthetase subfamily. In terms of assembly, homodimer. The tRNA molecule binds across the dimer.

It is found in the cytoplasm. The catalysed reaction is tRNA(Ser) + L-serine + ATP = L-seryl-tRNA(Ser) + AMP + diphosphate + H(+). The enzyme catalyses tRNA(Sec) + L-serine + ATP = L-seryl-tRNA(Sec) + AMP + diphosphate + H(+). It functions in the pathway aminoacyl-tRNA biosynthesis; selenocysteinyl-tRNA(Sec) biosynthesis; L-seryl-tRNA(Sec) from L-serine and tRNA(Sec): step 1/1. Its function is as follows. Catalyzes the attachment of serine to tRNA(Ser). Is also able to aminoacylate tRNA(Sec) with serine, to form the misacylated tRNA L-seryl-tRNA(Sec), which will be further converted into selenocysteinyl-tRNA(Sec). This chain is Serine--tRNA ligase, found in Methanocorpusculum labreanum (strain ATCC 43576 / DSM 4855 / Z).